A 124-amino-acid polypeptide reads, in one-letter code: Small ribosomal subunit protein uS12 (124 aa).

A disordered region spans residues 1-26 (MPTISQLVGSERKRLTKKTKSPALKA). At Asp-89 the chain carries 3-methylthioaspartic acid. The tract at residues 104-124 (TAGVKDRRQSRSKYGAKAPKD) is disordered.

It belongs to the universal ribosomal protein uS12 family. Part of the 30S ribosomal subunit. Contacts proteins S8 and S17. May interact with IF1 in the 30S initiation complex.

Functionally, with S4 and S5 plays an important role in translational accuracy. Its function is as follows. Interacts with and stabilizes bases of the 16S rRNA that are involved in tRNA selection in the A site and with the mRNA backbone. Located at the interface of the 30S and 50S subunits, it traverses the body of the 30S subunit contacting proteins on the other side and probably holding the rRNA structure together. The combined cluster of proteins S8, S12 and S17 appears to hold together the shoulder and platform of the 30S subunit. This Prochlorococcus marinus (strain MIT 9215) protein is Small ribosomal subunit protein uS12.